Reading from the N-terminus, the 652-residue chain is MQAVEIMEEIREKFKEFEKGGFRKKILITDLTPRDGQQCKLATRVRTDDLLPLCEAMDKVGFYAVEVWGGATYDVCLRYLKEDPWERLRRIKEVMPNTKLQMLFRGQNIVGYRPKSDKLVYKFVERAIKNGITVFRVFDALNDNRNIKTAVKAIKELGGEAHAEISYTRSPIHTYQKWIEYALEIAEMGADWLSFKDATGIIMPFETYAIIKGIKEATGGKLPVLLHNHDMSGTAIVNHMMAVLAGVDMLDTVLSPLAFGSSHPATESVVAMLEGTPFDTGIDMKKLDELAEIVKQIRKKYKKYETEYAGVNAKVLIHKIPGGMISNMVAQLIEANALDKIEEALEEVPNVERDLGHPPLLTPSSQIVGVQAVLNVISGERYKVITKEVRDYVEGKYGKPPGPISKELAEKILGPGKEPDFSIRAADLADPNDWDKAYEETKAILGREPTDEEVLLYALFPMQAKDFFVAREKGELHPEPVDELVETTEVKAGVVPGAAPVEFEIVYHGEKFKVKVEGVSAHQEPGKPRKYYIRVDGRLEEVQITPHVEAIPKGGPTPTAVQAEEKGIPKATQPGDATAPMPGRVVRVLVKEGDKVKEGQTVAIVEAMKMENEIHAPISGVVEKVFVKPGDNVTPDDALLRIKHIEEEVSYG.

A Pyruvate carboxyltransferase domain is found at 26 to 288 (ILITDLTPRD…DTGIDMKKLD (263 aa)). Substrate-binding positions include 34-38 (RDGQQ) and Arg-105. A divalent metal cation is bound at residue Asp-35. Positions 196, 227, and 229 each coordinate a divalent metal cation. Lys-196 is subject to N6-carboxylysine. Thr-362 lines the substrate pocket. Residues 563-643 (AEEKGIPKAT…TPDDALLRIK (81 aa)) enclose the Biotinyl-binding domain. An N6-biotinyllysine modification is found at Lys-609.

As to quaternary structure, heterohexadecamer of 8 large subunits and 8 small subunits. Mg(2+) serves as cofactor. Requires Mn(2+) as cofactor. Co(2+) is required as a cofactor. In terms of processing, biotinylated.

It catalyses the reaction hydrogencarbonate + 2-oxoglutarate + ATP = (S)-oxalosuccinate + ADP + phosphate + H(+). This Hydrogenobacter thermophilus (strain DSM 6534 / IAM 12695 / TK-6) protein is 2-oxoglutarate carboxylase large subunit.